The sequence spans 155 residues: Ribosome maturation factor RimP (155 aa).

Belongs to the RimP family.

It localises to the cytoplasm. Its function is as follows. Required for maturation of 30S ribosomal subunits. This Bacteroides fragilis (strain ATCC 25285 / DSM 2151 / CCUG 4856 / JCM 11019 / LMG 10263 / NCTC 9343 / Onslow / VPI 2553 / EN-2) protein is Ribosome maturation factor RimP.